We begin with the raw amino-acid sequence, 385 residues long: Putative RNA methyltransferase YpsC (385 aa).

One can recognise a THUMP domain in the interval 44–156 (AICRANLWLR…KDQALITLDS (113 aa)).

It belongs to the methyltransferase superfamily. Interacts with the RNA polymerase core.

The sequence is that of Putative RNA methyltransferase YpsC (ypsC) from Bacillus subtilis (strain 168).